The chain runs to 405 residues: Phosphopentomutase (405 aa).

Mn(2+)-binding residues include Asp10, Asp305, His310, Asp346, His347, and His358.

Belongs to the phosphopentomutase family. Mn(2+) serves as cofactor.

The protein resides in the cytoplasm. It carries out the reaction 2-deoxy-alpha-D-ribose 1-phosphate = 2-deoxy-D-ribose 5-phosphate. It catalyses the reaction alpha-D-ribose 1-phosphate = D-ribose 5-phosphate. Its pathway is carbohydrate degradation; 2-deoxy-D-ribose 1-phosphate degradation; D-glyceraldehyde 3-phosphate and acetaldehyde from 2-deoxy-alpha-D-ribose 1-phosphate: step 1/2. Its function is as follows. Isomerase that catalyzes the conversion of deoxy-ribose 1-phosphate (dRib-1-P) and ribose 1-phosphate (Rib-1-P) to deoxy-ribose 5-phosphate (dRib-5-P) and ribose 5-phosphate (Rib-5-P), respectively. This is Phosphopentomutase from Methylorubrum extorquens (strain CM4 / NCIMB 13688) (Methylobacterium extorquens).